A 205-amino-acid polypeptide reads, in one-letter code: Protein Nef (205 aa).

Gly-2 carries the N-myristoyl glycine; by host lipid modification. Residue Ser-6 is modified to Phosphoserine; by host. The interval 62 to 65 (EEEE) is acidic; interacts with host PACS1 and PACS2; stabilizes the interaction of NEF/MHC-I with host AP1M1; necessary for MHC-I internalization. The segment at 69 to 78 (PVRPQVPVRP) is SH3-binding; interaction with Src family tyrosine kinases. The short motif at 72-75 (PQVP) is the PxxP; stabilizes the interaction of NEF/MHC-I with host AP1M1; necessary for MHC-I internalization element. Residues 108 to 124 (DTLDLWVYHTQGYFPDW) are mediates dimerization, Nef-PTE1 interaction. The interval 148-180 (VDPEEVEKANEGENNCLLHPMSQHGMEDEDREV) is binding to ATP6V1H. Positions 164–165 (LL) match the Dileucine internalization motif; necessary for CD4 internalization motif. Residues 174–175 (ED) carry the Diacidic; necessary for CD4 internalization motif.

The protein belongs to the lentivirus primate group Nef protein family. In terms of assembly, monomer; cytosolic form. Homodimer; membrane bound form. Interacts with Nef associated p21-activated kinase (PAK2); this interaction activates PAK2. Associates with the Nef-MHC-I-AP1 complex; this complex is required for MHC-I internalization. Interacts (via C-terminus) with host PI3-kinase. Interacts with host PACS1; this interaction seems to be weak. Interacts with host PACS2. Interacts with host LCK and MAPK3; these interactions inhibit the kinase activity of the latter. Interacts with host ATP6V1H; this interaction may play a role in CD4 endocytosis. Associates with the CD4-Nef-AP2 complex; this complex is required for CD4 internalization. Interacts with host AP2 subunit alpha and AP2 subunit sigma2. Interacts with TCR-zeta chain; this interaction up-regulates the Fas ligand (FasL) surface expression. Interacts with host HCK, LYN, and SRC; these interactions activate the Src family kinases. Interacts with MAP3K5; this interaction inhibits the Fas and TNFR-mediated death signals. Interacts with beta-COP and PTE1. Interacts with human RACK1; this increases Nef phosphorylation by PKC. Interacts with TP53; this interaction decreases the half-life of TP53, protecting the infected cell against p53-mediated apoptosis. The virion-associated Nef proteins are cleaved by the viral protease to release the soluble C-terminal core protein. Nef is probably cleaved concomitantly with viral structural proteins on maturation of virus particles. Post-translationally, myristoylated. In terms of processing, phosphorylated on serine residues, probably by host PKCdelta and theta.

It is found in the host cell membrane. Its subcellular location is the virion. It localises to the secreted. The protein localises to the host Golgi apparatus membrane. Factor of infectivity and pathogenicity, required for optimal virus replication. Alters numerous pathways of T-lymphocyte function and down-regulates immunity surface molecules in order to evade host defense and increase viral infectivity. Alters the functionality of other immunity cells, like dendritic cells, monocytes/macrophages and NK cells. Its function is as follows. In infected CD4(+) T-lymphocytes, down-regulates the surface MHC-I, mature MHC-II, CD4, CD28, CCR5 and CXCR4 molecules. Mediates internalization and degradation of host CD4 through the interaction of with the cytoplasmic tail of CD4, the recruitment of AP-2 (clathrin adapter protein complex 2), internalization through clathrin coated pits, and subsequent transport to endosomes and lysosomes for degradation. Diverts host MHC-I molecules to the trans-Golgi network-associated endosomal compartments by an endocytic pathway to finally target them for degradation. MHC-I down-regulation may involve AP-1 (clathrin adapter protein complex 1) or possibly Src family kinase-ZAP70/Syk-PI3K cascade recruited by PACS2. In consequence infected cells are masked for immune recognition by cytotoxic T-lymphocytes. Decreasing the number of immune receptors also prevents reinfection by more HIV particles (superinfection). Down-regulates host SERINC3 and SERINC5 thereby excluding these proteins from the viral particles. Virion infectivity is drastically higher when SERINC3 or SERINC5 are excluded from the viral envelope, because these host antiviral proteins impair the membrane fusion event necessary for subsequent virion penetration. Functionally, bypasses host T-cell signaling by inducing a transcriptional program nearly identical to that of anti-CD3 cell activation. Interaction with TCR-zeta chain up-regulates the Fas ligand (FasL). Increasing surface FasL molecules and decreasing surface MHC-I molecules on infected CD4(+) cells send attacking cytotoxic CD8+ T-lymphocytes into apoptosis. In terms of biological role, plays a role in optimizing the host cell environment for viral replication without causing cell death by apoptosis. Protects the infected cells from apoptosis in order to keep them alive until the next virus generation is ready to strike. Inhibits the Fas and TNFR-mediated death signals by blocking MAP3K5/ASK1. Decreases the half-life of TP53, protecting the infected cell against p53-mediated apoptosis. Inhibits the apoptotic signals regulated by the Bcl-2 family proteins through the formation of a Nef/PI3-kinase/PAK2 complex that leads to activation of PAK2 and induces phosphorylation of host BAD. Extracellular Nef protein targets CD4(+) T-lymphocytes for apoptosis by interacting with CXCR4 surface receptors. This chain is Protein Nef, found in Human immunodeficiency virus type 1 group M subtype F1 (isolate VI850) (HIV-1).